Here is a 157-residue protein sequence, read N- to C-terminus: Ubiquitin-like protein 4A (157 aa).

The Ubiquitin-like domain maps to 1 to 76 (MQLTVKALQG…LNLVVKPLEK (76 aa)). Residue Lys-48 forms a Glycyl lysine isopeptide (Lys-Gly) (interchain with G-Cter in ubiquitin) linkage. At Ser-90 the chain carries Phosphoserine. The required and sufficient for interaction with BAG6 stretch occupies residues 96-138 (WQLISKVLARHFSAADASRVLEQLQRDYERSLSRLTLDDIERL).

Component of the BAG6/BAT3 complex, at least composed of BAG6, UBL4A and GET4/TRC35. Interacts with BAG6; the interaction is direct and required for UBL4A protein stability. Interacts with USP13; may be indirect via BAG6. Polyubiquitinated. Ubiquitination by AMFR and deubiquitination by USP13 may regulate the interaction between the BAG6/BAT3 complex and SGTA and therefore may regulate client proteins fate.

It localises to the cytoplasm. The protein resides in the cytosol. Its subcellular location is the nucleus. Its function is as follows. As part of a cytosolic protein quality control complex, the BAG6/BAT3 complex, maintains misfolded and hydrophobic patches-containing proteins in a soluble state and participates in their proper delivery to the endoplasmic reticulum or alternatively can promote their sorting to the proteasome where they undergo degradation. The BAG6/BAT3 complex is involved in the post-translational delivery of tail-anchored/type II transmembrane proteins to the endoplasmic reticulum membrane. Recruited to ribosomes, it interacts with the transmembrane region of newly synthesized tail-anchored proteins and together with SGTA and ASNA1 mediates their delivery to the endoplasmic reticulum. Client proteins that cannot be properly delivered to the endoplasmic reticulum are ubiquitinated and sorted to the proteasome. Similarly, the BAG6/BAT3 complex also functions as a sorting platform for proteins of the secretory pathway that are mislocalized to the cytosol either delivering them to the proteasome for degradation or to the endoplasmic reticulum. The BAG6/BAT3 complex also plays a role in the endoplasmic reticulum-associated degradation (ERAD), a quality control mechanism that eliminates unwanted proteins of the endoplasmic reticulum through their retrotranslocation to the cytosol and their targeting to the proteasome. It maintains these retrotranslocated proteins in an unfolded yet soluble state condition in the cytosol to ensure their proper delivery to the proteasome. The polypeptide is Ubiquitin-like protein 4A (Homo sapiens (Human)).